A 99-amino-acid chain; its full sequence is Malonate decarboxylase acyl carrier protein (99 aa).

The residue at position 25 (Ser25) is an O-(phosphoribosyl dephospho-coenzyme A)serine.

Belongs to the MdcC family. In terms of processing, covalently binds the prosthetic group of malonate decarboxylase.

Its subcellular location is the cytoplasm. Functionally, subunit of malonate decarboxylase, it is an acyl carrier protein to which acetyl and malonyl thioester residues are bound via a 2'-(5''-phosphoribosyl)-3'-dephospho-CoA prosthetic group and turn over during the catalytic mechanism. The sequence is that of Malonate decarboxylase acyl carrier protein from Pseudomonas fluorescens (strain ATCC BAA-477 / NRRL B-23932 / Pf-5).